The sequence spans 156 residues: Small ribosomal subunit protein uS7 (156 aa).

It belongs to the universal ribosomal protein uS7 family. Part of the 30S ribosomal subunit. Contacts proteins S9 and S11.

One of the primary rRNA binding proteins, it binds directly to 16S rRNA where it nucleates assembly of the head domain of the 30S subunit. Is located at the subunit interface close to the decoding center, probably blocks exit of the E-site tRNA. The sequence is that of Small ribosomal subunit protein uS7 from Paenarthrobacter aurescens (strain TC1).